A 459-amino-acid polypeptide reads, in one-letter code: Interleukin-7 receptor subunit alpha (459 aa).

The signal sequence occupies residues 1–20 (MTILGTTFGVFFSLLQVVSG). Residues 21-241 (ESGYAQNGDL…NNHSGETNPT (221 aa)) lie on the Extracellular side of the membrane. A disulfide bridge connects residues Cys-42 and Cys-57. N-linked (GlcNAc...) asparagine glycosylation is found at Asn-49 and Asn-65. Intrachain disulfides connect Cys-74/Cys-82 and Cys-108/Cys-118. The region spanning 131 to 231 (APFDLSVIYR…PSYYFRTPEI (101 aa)) is the Fibronectin type-III domain. The N-linked (GlcNAc...) asparagine glycan is linked to Asn-182. A WSXWS motif motif is present at residues 217 to 221 (WSEWS). A helical transmembrane segment spans residues 242 to 262 (LLTISILSVLSVVLLVILACV). Topologically, residues 263 to 459 (LWKKRIKPII…VTMSSFCQKR (197 aa)) are cytoplasmic. The Box 1 motif motif lies at 272–280 (IWPSLPDHK). Thr-282 carries the post-translational modification Phosphothreonine; by PKC. The disordered stretch occupies residues 327–357 (TVPPQLEESETQRPGGDVQSPSWPSENVVTT). Over residues 345–357 (QSPSWPSENVVTT) the composition is skewed to polar residues.

It belongs to the type I cytokine receptor family. Type 4 subfamily. In terms of assembly, the IL7 receptor is a heterodimer of IL7R and IL2RG. The TSLP receptor is a heterodimer of CRLF2 and IL7R. Interacts with CD53. Post-translationally, N-glycosylated IL-7Ralpha binds IL7 300-fold more tightly than the unglycosylated form. Ubiquitinated by MARCHF8; leading to lysosomal degradation.

The protein resides in the cell membrane. Receptor for interleukin-7. Also acts as a receptor for thymic stromal lymphopoietin (TSLP). The chain is Interleukin-7 receptor subunit alpha (IL7R) from Callithrix jacchus (White-tufted-ear marmoset).